Reading from the N-terminus, the 482-residue chain is Signal recognition particle protein (482 aa).

GTP-binding positions include 107-114, 189-193, and 247-250; these read GLQGTGKT, DTAGR, and TKLD. Disordered stretches follow at residues 380 to 413 and 452 to 482; these read MTTE…TDVS and FGGQ…FGQL. The span at 452–468 shows a compositional bias: gly residues; sequence FGGQPGPGFRGYRGGGG. Residues 469–482 show a composition bias toward basic residues; that stretch reads KPKKKKKKKGFGQL.

It belongs to the GTP-binding SRP family. SRP54 subfamily. Part of the signal recognition particle protein translocation system, which is composed of SRP and FtsY.

It is found in the cytoplasm. The enzyme catalyses GTP + H2O = GDP + phosphate + H(+). Its function is as follows. Involved in targeting and insertion of nascent membrane proteins into the cytoplasmic membrane. Binds to the hydrophobic signal sequence of the ribosome-nascent chain (RNC) as it emerges from the ribosomes. The SRP-RNC complex is then targeted to the cytoplasmic membrane where it interacts with the SRP receptor FtsY. The chain is Signal recognition particle protein from Synechocystis sp. (strain ATCC 27184 / PCC 6803 / Kazusa).